The chain runs to 32 residues: Delta-conotoxin-like CnVIC (32 aa).

3 disulfides stabilise this stretch: Cys3–Cys18, Cys10–Cys22, and Cys17–Cys27. Residues Pro6 and Pro14 each carry the 4-hydroxyproline modification.

It belongs to the conotoxin O1 superfamily. As to expression, expressed by the venom duct.

The protein localises to the secreted. Delta-conotoxins bind to site 6 of voltage-gated sodium channels (Nav) and inhibit the inactivation process. This toxin acts on Nav1.2/SCN2A, Nav1.4/SCN4A, Nav1.5/SCN5A (weak activity), Nav1.6/SCN8A (EC(50)=2.5 uM). This is Delta-conotoxin-like CnVIC from Conus consors (Singed cone).